The sequence spans 743 residues: Fork head transcription factor 1 (743 aa).

Positions 39 to 94 (VTMGRKASNSSDCDVHLGDTKAISRQHAKIFYSFPNQRFEISVMGKNGAFVDGEFV) constitute an FHA domain. Disordered regions lie at residues 214–291 (QPPK…ATQK), 411–450 (GISA…LQNG), and 529–743 (QMQG…SSYT). Residues 221 to 230 (VSPSSIQRLS) are compositionally biased toward polar residues. The segment at residues 291–385 (KPNLSYANLI…EGNFFRRTKK (95 aa)) is a DNA-binding region (fork-head). Over residues 434–443 (SRGENVEDRP) the composition is skewed to basic and acidic residues. Low complexity predominate over residues 529–539 (QMQGPQQVQQQ). The span at 562–576 (NITSPSPSISVTQRP) shows a compositional bias: polar residues. The segment covering 614-624 (SAGPSSVRSSS) has biased composition (low complexity). Polar residues-rich tracts occupy residues 625-643 (YNST…QNLH), 670-686 (TGNQ…ASSF), and 695-726 (ENGS…NSSD).

It is found in the nucleus. Its function is as follows. Acts as a transcriptional activator for ribosomal protein genes (RPG) that contain a HomolE UAS (upstream activating sequence) in addition to a HomolD promoter element; HomolD plays the role of a TATA box in RPG promoters that do not contain a canonical TATA sequence. Binds to HomolE elements with consensus sequence 3'-ACCCTACCCT-5' (or its inverted form AGGGTAGGGT). The protein is Fork head transcription factor 1 of Schizosaccharomyces pombe (strain 972 / ATCC 24843) (Fission yeast).